We begin with the raw amino-acid sequence, 322 residues long: Lipoyl synthase (322 aa).

Residues 1–24 (MVTVLDTVSKPRPRHPEKAHRPDQ) form a disordered region. The segment covering 14 to 24 (RHPEKAHRPDQ) has biased composition (basic and acidic residues). Residues cysteine 59, cysteine 64, cysteine 70, cysteine 85, cysteine 89, cysteine 92, and serine 298 each contribute to the [4Fe-4S] cluster site. Residues 71–287 (WDKKHATFMI…ETIAYTKGFL (217 aa)) enclose the Radical SAM core domain.

It belongs to the radical SAM superfamily. Lipoyl synthase family. [4Fe-4S] cluster serves as cofactor.

It localises to the cytoplasm. It catalyses the reaction [[Fe-S] cluster scaffold protein carrying a second [4Fe-4S](2+) cluster] + N(6)-octanoyl-L-lysyl-[protein] + 2 oxidized [2Fe-2S]-[ferredoxin] + 2 S-adenosyl-L-methionine + 4 H(+) = [[Fe-S] cluster scaffold protein] + N(6)-[(R)-dihydrolipoyl]-L-lysyl-[protein] + 4 Fe(3+) + 2 hydrogen sulfide + 2 5'-deoxyadenosine + 2 L-methionine + 2 reduced [2Fe-2S]-[ferredoxin]. Its pathway is protein modification; protein lipoylation via endogenous pathway; protein N(6)-(lipoyl)lysine from octanoyl-[acyl-carrier-protein]: step 2/2. Its function is as follows. Catalyzes the radical-mediated insertion of two sulfur atoms into the C-6 and C-8 positions of the octanoyl moiety bound to the lipoyl domains of lipoate-dependent enzymes, thereby converting the octanoylated domains into lipoylated derivatives. The sequence is that of Lipoyl synthase from Chelativorans sp. (strain BNC1).